Here is a 918-residue protein sequence, read N- to C-terminus: Interleukin-6 receptor subunit beta (918 aa).

Positions 1-22 (MSALRIWLMQALLIFLTTESIG) are cleaved as a signal peptide. Topologically, residues 23 to 618 (QLVEPCGYIY…TLKFAQGEIE (596 aa)) are extracellular. In terms of domain architecture, Ig-like C2-type spans 26–120 (EPCGYIYPEF…IEQNVYGITI (95 aa)). 2 cysteine pairs are disulfide-bonded: Cys28–Cys54 and Cys48–Cys103. Residues Asn43, Asn61, Asn83, and Asn131 are each glycosylated (N-linked (GlcNAc...) asparagine). Fibronectin type-III domains follow at residues 125 to 215 (PPDI…NFDP), 223 to 323 (PPHN…TYED), 328 to 418 (APSF…IPGS), 422 to 516 (ASHP…LKQA), and 518 to 612 (PSKG…TLKF). Cys134 and Cys144 form a disulfide bridge. N-linked (GlcNAc...) asparagine glycosylation is present at Asn157. Residues Cys172 and Cys181 are joined by a disulfide bond. Residues Asn205 and Asn226 are each glycosylated (N-linked (GlcNAc...) asparagine). A WSXWS motif motif is present at residues 309–313 (WSDWS). N-linked (GlcNAc...) asparagine glycans are attached at residues Asn382 and Asn389. Cysteines 457 and 465 form a disulfide. N-linked (GlcNAc...) asparagine glycosylation is found at Asn477 and Asn552. A helical transmembrane segment spans residues 619–640 (AIVVPVCLAFLLTTLLGVLFCF). At 641–918 (NKRDLIKKHI…TVRQGGYMPQ (278 aa)) the chain is on the cytoplasmic side. The Box 1 motif motif lies at 650–658 (IWPNVPDPS). Disordered regions lie at residues 659-679 (KSHI…NSKD), 720-754 (TEGH…STAS), 773-795 (VQVF…PEDL), and 817-842 (SCSQ…GSEE). 2 positions are modified to phosphoserine: Ser660 and Ser666. Residues 730–751 (SSCMSSSRPSISSSEENESAQS) are compositionally biased toward low complexity. The segment covering 773–785 (VQVFSRSESTQPL) has biased composition (polar residues). Residues Ser781, Ser788, Ser828, and Ser838 each carry the phosphoserine modification.

It belongs to the type I cytokine receptor family. Type 2 subfamily. In terms of assembly, component of a hexamer of two molecules each of IL6, IL6R and IL6ST; associates with the complex IL6:IL6R but does not interact with IL6. Forms heterodimers composed of LIFR and IL6ST (type I OSM receptor) which are activated by LIF and OSM. Also forms heterodimers composed of OSMR and IL6ST (type II receptor) which are activated by OSM but not by LIF. Interacts with HCK. Interacts with INPP5D/SHIP1. Interacts with SRC and YES. Interacts with ARMH4; this interaction prevents IL6ST protein homodimerization and bridges ARMH4 with IL6R and STAT3 and therefore inhibits phosphorylation of STAT3 at 'Tyr-705'. Phosphorylation of Ser-781 down-regulates cell surface expression. In terms of processing, heavily N-glycosylated. Glycosylation is required for protein stability and localization in plasma membrane but not for ligand binding. As to expression, found in hepatocytes, astrocytes, fibroblasts and endothelial cells.

The protein localises to the cell membrane. Signal-transducing molecule. The receptor systems for IL6, LIF, OSM, CNTF, IL11, CTF1 and BSF3 can utilize IL6ST for initiating signal transmission. Binding of IL6 to IL6R induces IL6ST homodimerization and formation of a high-affinity receptor complex, which activates the intracellular JAK-MAPK and JAK-STAT3 signaling pathways. That causes phosphorylation of IL6ST tyrosine residues which in turn activates STAT3. In parallel, the IL6 signaling pathway induces the expression of two cytokine receptor signaling inhibitors, SOCS1 and SOCS3, which inhibit JAK and terminate the activity of the IL6 signaling pathway as a negative feedback loop. Also activates the yes-associated protein 1 (YAP) and NOTCH pathways to control inflammation-induced epithelial regeneration, independently of STAT3. Mediates signals which regulate immune response, hematopoiesis, pain control and bone metabolism. Has a role in embryonic development. Essential for survival of motor and sensory neurons and for differentiation of astrocytes. Required for expression of TRPA1 in nociceptive neurons. Required for the maintenance of PTH1R expression in the osteoblast lineage and for the stimulation of PTH-induced osteoblast differentiation. Required for normal trabecular bone mass and cortical bone composition. This chain is Interleukin-6 receptor subunit beta, found in Rattus norvegicus (Rat).